A 549-amino-acid chain; its full sequence is Glucose-6-phosphate isomerase (549 aa).

Residue E355 is the Proton donor of the active site. Catalysis depends on residues H387 and K515.

The protein belongs to the GPI family.

Its subcellular location is the cytoplasm. The catalysed reaction is alpha-D-glucose 6-phosphate = beta-D-fructose 6-phosphate. It functions in the pathway carbohydrate biosynthesis; gluconeogenesis. It participates in carbohydrate degradation; glycolysis; D-glyceraldehyde 3-phosphate and glycerone phosphate from D-glucose: step 2/4. Catalyzes the reversible isomerization of glucose-6-phosphate to fructose-6-phosphate. In Haemophilus influenzae (strain ATCC 51907 / DSM 11121 / KW20 / Rd), this protein is Glucose-6-phosphate isomerase.